The chain runs to 372 residues: 4-hydroxy-3-methylbut-2-en-1-yl diphosphate synthase (flavodoxin) (372 aa).

[4Fe-4S] cluster is bound by residues cysteine 270, cysteine 273, cysteine 305, and glutamate 312.

This sequence belongs to the IspG family. [4Fe-4S] cluster serves as cofactor.

The enzyme catalyses (2E)-4-hydroxy-3-methylbut-2-enyl diphosphate + oxidized [flavodoxin] + H2O + 2 H(+) = 2-C-methyl-D-erythritol 2,4-cyclic diphosphate + reduced [flavodoxin]. The protein operates within isoprenoid biosynthesis; isopentenyl diphosphate biosynthesis via DXP pathway; isopentenyl diphosphate from 1-deoxy-D-xylulose 5-phosphate: step 5/6. Functionally, converts 2C-methyl-D-erythritol 2,4-cyclodiphosphate (ME-2,4cPP) into 1-hydroxy-2-methyl-2-(E)-butenyl 4-diphosphate. This Vibrio vulnificus (strain CMCP6) protein is 4-hydroxy-3-methylbut-2-en-1-yl diphosphate synthase (flavodoxin).